A 240-amino-acid polypeptide reads, in one-letter code: Probable phosphatase Pcar_2586 (240 aa).

Zn(2+) is bound by residues His12, His14, His20, His45, Glu78, His105, His136, Asp197, and His199.

This sequence belongs to the PHP family. Zn(2+) is required as a cofactor.

This Syntrophotalea carbinolica (strain DSM 2380 / NBRC 103641 / GraBd1) (Pelobacter carbinolicus) protein is Probable phosphatase Pcar_2586.